A 427-amino-acid polypeptide reads, in one-letter code: Trigger factor (427 aa).

Positions 163 to 248 (GDTVVIDFVG…IHEVKAKEVP (86 aa)) constitute a PPIase FKBP-type domain.

Belongs to the FKBP-type PPIase family. Tig subfamily.

It localises to the cytoplasm. It carries out the reaction [protein]-peptidylproline (omega=180) = [protein]-peptidylproline (omega=0). Functionally, involved in protein export. Acts as a chaperone by maintaining the newly synthesized protein in an open conformation. Functions as a peptidyl-prolyl cis-trans isomerase. This Streptococcus pneumoniae (strain JJA) protein is Trigger factor.